Consider the following 370-residue polypeptide: 4-hydroxy-3-methylbut-2-en-1-yl diphosphate synthase (flavodoxin) (370 aa).

The [4Fe-4S] cluster site is built by Cys270, Cys273, Cys305, and Glu312.

Belongs to the IspG family. The cofactor is [4Fe-4S] cluster.

The catalysed reaction is (2E)-4-hydroxy-3-methylbut-2-enyl diphosphate + oxidized [flavodoxin] + H2O + 2 H(+) = 2-C-methyl-D-erythritol 2,4-cyclic diphosphate + reduced [flavodoxin]. It functions in the pathway isoprenoid biosynthesis; isopentenyl diphosphate biosynthesis via DXP pathway; isopentenyl diphosphate from 1-deoxy-D-xylulose 5-phosphate: step 5/6. Its function is as follows. Converts 2C-methyl-D-erythritol 2,4-cyclodiphosphate (ME-2,4cPP) into 1-hydroxy-2-methyl-2-(E)-butenyl 4-diphosphate. The protein is 4-hydroxy-3-methylbut-2-en-1-yl diphosphate synthase (flavodoxin) of Marinomonas sp. (strain MWYL1).